A 124-amino-acid polypeptide reads, in one-letter code: Small ribosomal subunit protein uS12 (124 aa).

Asp89 carries the post-translational modification 3-methylthioaspartic acid.

Belongs to the universal ribosomal protein uS12 family. Part of the 30S ribosomal subunit. Contacts proteins S8 and S17. May interact with IF1 in the 30S initiation complex.

Its function is as follows. With S4 and S5 plays an important role in translational accuracy. Interacts with and stabilizes bases of the 16S rRNA that are involved in tRNA selection in the A site and with the mRNA backbone. Located at the interface of the 30S and 50S subunits, it traverses the body of the 30S subunit contacting proteins on the other side and probably holding the rRNA structure together. The combined cluster of proteins S8, S12 and S17 appears to hold together the shoulder and platform of the 30S subunit. This Blochmanniella floridana protein is Small ribosomal subunit protein uS12.